The sequence spans 449 residues: F-box/LRR-repeat protein At3g60040 (449 aa).

The F-box domain maps to Arg12–Gln64. LRR repeat units lie at residues Leu161–Thr188, Phe191–His215, His216–Tyr237, Cys239–His263, Glu287–Pro312, and Lys340–Asp365.

The polypeptide is F-box/LRR-repeat protein At3g60040 (Arabidopsis thaliana (Mouse-ear cress)).